The sequence spans 416 residues: Tryptophan synthase beta chain (416 aa).

A disordered region spans residues 1–23 (MTSTLPSQPKDMELANSSRPSVH). At lysine 109 the chain carries N6-(pyridoxal phosphate)lysine.

This sequence belongs to the TrpB family. Tetramer of two alpha and two beta chains. Pyridoxal 5'-phosphate serves as cofactor.

It carries out the reaction (1S,2R)-1-C-(indol-3-yl)glycerol 3-phosphate + L-serine = D-glyceraldehyde 3-phosphate + L-tryptophan + H2O. It participates in amino-acid biosynthesis; L-tryptophan biosynthesis; L-tryptophan from chorismate: step 5/5. In terms of biological role, the beta subunit is responsible for the synthesis of L-tryptophan from indole and L-serine. The polypeptide is Tryptophan synthase beta chain (Prochlorococcus marinus (strain MIT 9211)).